Reading from the N-terminus, the 199-residue chain is Holliday junction branch migration complex subunit RuvA (199 aa).

Residues 1 to 63 (MIGKLNGKID…EEHIHLYGFL (63 aa)) form a domain I region. A domain II region spans residues 64-141 (TLEEKNFFNL…TKIFSSSAII (78 aa)). The tract at residues 141-145 (IKDSN) is flexible linker. The tract at residues 146 to 199 (ISSIAINEVMKALVNLGFTRFEAQNTVQGIITQNPKISIDELIKTALKNRNSSF) is domain III.

It belongs to the RuvA family. As to quaternary structure, homotetramer. Forms an RuvA(8)-RuvB(12)-Holliday junction (HJ) complex. HJ DNA is sandwiched between 2 RuvA tetramers; dsDNA enters through RuvA and exits via RuvB. An RuvB hexamer assembles on each DNA strand where it exits the tetramer. Each RuvB hexamer is contacted by two RuvA subunits (via domain III) on 2 adjacent RuvB subunits; this complex drives branch migration. In the full resolvosome a probable DNA-RuvA(4)-RuvB(12)-RuvC(2) complex forms which resolves the HJ.

It is found in the cytoplasm. Its function is as follows. The RuvA-RuvB-RuvC complex processes Holliday junction (HJ) DNA during genetic recombination and DNA repair, while the RuvA-RuvB complex plays an important role in the rescue of blocked DNA replication forks via replication fork reversal (RFR). RuvA specifically binds to HJ cruciform DNA, conferring on it an open structure. The RuvB hexamer acts as an ATP-dependent pump, pulling dsDNA into and through the RuvAB complex. HJ branch migration allows RuvC to scan DNA until it finds its consensus sequence, where it cleaves and resolves the cruciform DNA. This chain is Holliday junction branch migration complex subunit RuvA, found in Rickettsia prowazekii (strain Madrid E).